A 104-amino-acid chain; its full sequence is Cytochrome c oxidase assembly factor 6 (104 aa).

The disordered stretch occupies residues 1-22 (MGLFSFDGGKKESQPPNTRSQR). One can recognise a CHCH domain in the interval 22-76 (RKLCWESRDAFFQCLDKADILDAMDPKNSKSIKSHCKVENEKFEENCAHSWIKYF). The Cx9C motif signature appears at 25–35 (CWESRDAFFQC). 2 disulfide bridges follow: cysteine 25–cysteine 68 and cysteine 35–cysteine 57. Residues 57-68 (CKVENEKFEENC) carry the Cx10C motif motif.

This sequence belongs to the cytochrome c oxidase subunit 6B family. As to quaternary structure, interacts with COX2.

The protein resides in the cytoplasm. It is found in the nucleus. The protein localises to the mitochondrion intermembrane space. In terms of biological role, involved in the maturation of the mitochondrial respiratory chain complex IV subunit MT-CO2/COX2. Thereby, may regulate early steps of complex IV assembly. Mitochondrial respiratory chain complex IV or cytochrome c oxidase is the component of the respiratory chain that catalyzes the transfer of electrons from intermembrane space cytochrome c to molecular oxygen in the matrix and as a consequence contributes to the proton gradient involved in mitochondrial ATP synthesis. May also be required for efficient formation of respiratory supercomplexes comprised of complexes III and IV. The protein is Cytochrome c oxidase assembly factor 6 of Saccharomyces cerevisiae (strain ATCC 204508 / S288c) (Baker's yeast).